Reading from the N-terminus, the 467-residue chain is Asparagine--tRNA ligase (467 aa).

Belongs to the class-II aminoacyl-tRNA synthetase family. In terms of assembly, homodimer.

The protein localises to the cytoplasm. The catalysed reaction is tRNA(Asn) + L-asparagine + ATP = L-asparaginyl-tRNA(Asn) + AMP + diphosphate + H(+). The polypeptide is Asparagine--tRNA ligase (Glaesserella parasuis serovar 5 (strain SH0165) (Haemophilus parasuis)).